A 423-amino-acid chain; its full sequence is MTAQSTSLTQSLAQLDPEVAAAVDAELARQRDTLEMIASENFAPRAVLEAQGTVLTNKYAEGYPGRRYYGGCEHVDVIEQLAIDRAKALFGAEHANVQPHSGAQANTAVYFALLQPGDTILGLDLAHGGHLTHGMRINYSGKILNAVAYHVRESDGLIDYDEVEALAKEHQPKLIIAGWSAYPRQLDFARFREIADQTGALLMVDMAHFAGLVAAGLHPNPVPYADVVTTTTHKTLGGPRGGLILAKEELGKKINSAVFPGMQGGPLQHVIAAKAVALKVAASEEFAERQRRTLSGAKILAERLTQPDAAEAGIRVLTGGTDVHLVLVDLVNSELNGKEAEDRLHEIGITVNRNAVPNDPRPPMVTSGLRIGTPALATRGFGDADFAEVADIIAEALKPGFDAATLRSRVQALAAKHPLYPGL.

Residues L125 and 129-131 (GHL) contribute to the (6S)-5,6,7,8-tetrahydrofolate site. Residue K234 is modified to N6-(pyridoxal phosphate)lysine. Residue E249 coordinates (6S)-5,6,7,8-tetrahydrofolate.

It belongs to the SHMT family. Homodimer. Pyridoxal 5'-phosphate is required as a cofactor.

It is found in the cytoplasm. The catalysed reaction is (6R)-5,10-methylene-5,6,7,8-tetrahydrofolate + glycine + H2O = (6S)-5,6,7,8-tetrahydrofolate + L-serine. The protein operates within one-carbon metabolism; tetrahydrofolate interconversion. It functions in the pathway amino-acid biosynthesis; glycine biosynthesis; glycine from L-serine: step 1/1. Functionally, catalyzes the reversible interconversion of serine and glycine with tetrahydrofolate (THF) serving as the one-carbon carrier. This reaction serves as the major source of one-carbon groups required for the biosynthesis of purines, thymidylate, methionine, and other important biomolecules. Also exhibits THF-independent aldolase activity toward beta-hydroxyamino acids, producing glycine and aldehydes, via a retro-aldol mechanism. This is Serine hydroxymethyltransferase from Thermobifida fusca (strain YX).